A 349-amino-acid chain; its full sequence is tRNA pseudouridine synthase D (349 aa).

F27 is a substrate binding site. The active-site Nucleophile is the D80. N129 is a binding site for substrate. In terms of domain architecture, TRUD spans 155-303; the sequence is GVPNYFGAQR…VEAARRAMLL (149 aa). F329 is a substrate binding site.

Belongs to the pseudouridine synthase TruD family.

The catalysed reaction is uridine(13) in tRNA = pseudouridine(13) in tRNA. Its function is as follows. Responsible for synthesis of pseudouridine from uracil-13 in transfer RNAs. The chain is tRNA pseudouridine synthase D from Escherichia coli O9:H4 (strain HS).